Reading from the N-terminus, the 167-residue chain is SsrA-binding protein (167 aa).

Positions 139–158 are enriched in basic and acidic residues; the sequence is QNHDKRDAAKDRDWQRDKQR. The tract at residues 139-167 is disordered; sequence QNHDKRDAAKDRDWQRDKQRVMRRHNRDA.

This sequence belongs to the SmpB family.

Its subcellular location is the cytoplasm. Its function is as follows. Required for rescue of stalled ribosomes mediated by trans-translation. Binds to transfer-messenger RNA (tmRNA), required for stable association of tmRNA with ribosomes. tmRNA and SmpB together mimic tRNA shape, replacing the anticodon stem-loop with SmpB. tmRNA is encoded by the ssrA gene; the 2 termini fold to resemble tRNA(Ala) and it encodes a 'tag peptide', a short internal open reading frame. During trans-translation Ala-aminoacylated tmRNA acts like a tRNA, entering the A-site of stalled ribosomes, displacing the stalled mRNA. The ribosome then switches to translate the ORF on the tmRNA; the nascent peptide is terminated with the 'tag peptide' encoded by the tmRNA and targeted for degradation. The ribosome is freed to recommence translation, which seems to be the essential function of trans-translation. This chain is SsrA-binding protein, found in Xanthomonas euvesicatoria pv. vesicatoria (strain 85-10) (Xanthomonas campestris pv. vesicatoria).